The chain runs to 507 residues: Maturase K (507 aa).

This sequence belongs to the intron maturase 2 family. MatK subfamily.

The protein localises to the plastid. The protein resides in the chloroplast. In terms of biological role, usually encoded in the trnK tRNA gene intron. Probably assists in splicing its own and other chloroplast group II introns. The polypeptide is Maturase K (Liriodendron chinense (Chinese tulip tree)).